The sequence spans 217 residues: Ribonuclease HII (217 aa).

The RNase H type-2 domain occupies 27–216 (SQVAGVDEAG…VKESIQEGVC (190 aa)). A divalent metal cation contacts are provided by Asp33, Glu34, and Asp126.

Belongs to the RNase HII family. Mn(2+) is required as a cofactor. Requires Mg(2+) as cofactor.

The protein resides in the cytoplasm. It carries out the reaction Endonucleolytic cleavage to 5'-phosphomonoester.. Its function is as follows. Endonuclease that specifically degrades the RNA of RNA-DNA hybrids. In Chlamydia trachomatis serovar D (strain ATCC VR-885 / DSM 19411 / UW-3/Cx), this protein is Ribonuclease HII (rnhB).